A 303-amino-acid chain; its full sequence is Counting factor 50 (303 aa).

The first 24 residues, 1–24, serve as a signal peptide directing secretion; it reads MNKMNNIFLIISSIILSIVIFVSG. Residues 28-240 form the Ch-type lysozyme domain; that stretch reads IDFSSEISVG…CSTSSGSASG (213 aa). Asn67 carries N-linked (GlcNAc...) asparagine glycosylation. Glu125 is a catalytic residue. Asn170 carries N-linked (GlcNAc...) asparagine glycosylation. The interval 226–303 is S-G-S motif repeats; the sequence is GSGSGCSTSS…GSGTGSGSSI (78 aa). The span at 236–292 shows a compositional bias: low complexity; sequence GSASGSASGSASGSASGSNSGSSNSGSSNSGSSNSGSNSGSSNSGSGNSGSSNSGSA. The segment at 236–303 is disordered; sequence GSASGSASGS…GSGTGSGSSI (68 aa). Residues 293–303 are compositionally biased toward gly residues; it reads SGSGTGSGSSI.

Belongs to the glycosyl hydrolase 25 family. In terms of assembly, monomer. Component of the counting factor (CF) complex, which includes cf60, cf50, cf45-1 and ctnA.

The protein resides in the secreted. It carries out the reaction Hydrolysis of (1-&gt;4)-beta-linkages between N-acetylmuramic acid and N-acetyl-D-glucosamine residues in a peptidoglycan and between N-acetyl-D-glucosamine residues in chitodextrins.. Cell-counting factor that limits the maximum size of the multicellular structure during aggregation. Has a very low lysozyme activity. The chain is Counting factor 50 (cf50-1) from Dictyostelium discoideum (Social amoeba).